The primary structure comprises 367 residues: Glutamate 5-kinase (367 aa).

Lys-9 provides a ligand contact to ATP. Substrate contacts are provided by Ser-49, Asp-136, and Asn-148. Residues 168 to 169 (TD) and 210 to 216 (TGGMKSK) contribute to the ATP site. One can recognise a PUA domain in the interval 276–350 (SGQIEVDAGA…GMQSQDIQVR (75 aa)).

Belongs to the glutamate 5-kinase family.

It localises to the cytoplasm. The catalysed reaction is L-glutamate + ATP = L-glutamyl 5-phosphate + ADP. The protein operates within amino-acid biosynthesis; L-proline biosynthesis; L-glutamate 5-semialdehyde from L-glutamate: step 1/2. In terms of biological role, catalyzes the transfer of a phosphate group to glutamate to form L-glutamate 5-phosphate. The polypeptide is Glutamate 5-kinase (Bacillus cereus (strain B4264)).